The sequence spans 430 residues: Phosphomethylpyrimidine synthase (430 aa).

Substrate-binding positions include Asn67, Met96, Tyr125, His161, 183–185 (SRG), 224–227 (DALR), and Glu263. His267 is a binding site for Zn(2+). A substrate-binding site is contributed by Tyr290. His331 lines the Zn(2+) pocket. 3 residues coordinate [4Fe-4S] cluster: Cys406, Cys409, and Cys413.

Belongs to the ThiC family. Homodimer. [4Fe-4S] cluster is required as a cofactor.

It catalyses the reaction 5-amino-1-(5-phospho-beta-D-ribosyl)imidazole + S-adenosyl-L-methionine = 4-amino-2-methyl-5-(phosphooxymethyl)pyrimidine + CO + 5'-deoxyadenosine + formate + L-methionine + 3 H(+). Its pathway is cofactor biosynthesis; thiamine diphosphate biosynthesis. Catalyzes the synthesis of the hydroxymethylpyrimidine phosphate (HMP-P) moiety of thiamine from aminoimidazole ribotide (AIR) in a radical S-adenosyl-L-methionine (SAM)-dependent reaction. The chain is Phosphomethylpyrimidine synthase from Campylobacter jejuni (strain RM1221).